Here is a 380-residue protein sequence, read N- to C-terminus: MATECIATVPQIFSENKTKEDSSIFDAKLLNQHSHHIPQQFVWPDHEKPSTDVQPLQVPLIDLAGFLSGDSCLASEATRLVSKAATKHGFFLITNHGVDESLLSRAYLHMDSFFKAPACEKQKAQRKWGESSGYASSFVGRFSSKLPWKETLSFKFSPEEKIHSQTVKDFVSKKMGDGYEDFGKVYQEYAEAMNTLSLKIMELLGMSLGVERRYFKEFFEDSDSIFRLNYYPQCKQPELALGTGPHCDPTSLTILHQDQVGGLQVFVDNKWQSIPPNPHAFVVNIGDTFMALTNGRYKSCLHRAVVNSERERKTFAFFLCPKGEKVVKPPEELVNGVKSGERKYPDFTWSMFLEFTQKHYRADMNTLDEFSIWLKNRRSF.

In terms of domain architecture, Fe2OG dioxygenase spans 221 to 321; that stretch reads DSDSIFRLNY…RKTFAFFLCP (101 aa). Fe cation is bound by residues His-246, Asp-248, and His-302. The active site involves Arg-312.

The protein belongs to the iron/ascorbate-dependent oxidoreductase family. GA20OX subfamily. Fe(2+) is required as a cofactor. The cofactor is L-ascorbate. In terms of tissue distribution, expressed at high level in developing siliques. Detected in seeds, roots, leaves and inflorescences. In seeds, specifically detected at the outer layer of the outer integument.

The catalysed reaction is gibberellin A12 + 2 2-oxoglutarate + 3 O2 + H(+) = gibberellin A9 + 2 succinate + 3 CO2 + 2 H2O. It carries out the reaction gibberellin A12 + 3 2-oxoglutarate + 3 O2 = gibberellin A25 + 3 succinate + 3 CO2 + H2O + H(+). The enzyme catalyses gibberellin A53 + 2 2-oxoglutarate + 3 O2 + H(+) = gibberellin A20 + 2 succinate + 3 CO2 + 2 H2O. The protein operates within plant hormone biosynthesis; gibberellin biosynthesis. Its function is as follows. Key oxidase enzyme in the biosynthesis of gibberellin that catalyzes the conversion of GA12 and GA53 to GA9 and GA20 respectively, via a three-step oxidation at C-20 of the GA skeleton, and GA25 is also formed as a minor product. GA53 is less effectively oxidized than GA12. The protein is Gibberellin 20 oxidase 3 (GA20OX3) of Arabidopsis thaliana (Mouse-ear cress).